The following is a 336-amino-acid chain: Structure-specific endonuclease subunit SLX1 (336 aa).

One can recognise a GIY-YIG domain in the interval 21-104 (SFYGVYLLQS…QHCHETRHIK (84 aa)). Residues 37 to 57 (FYIGSTPDPPRRLRQHNGDLK) are disordered. The SLX1-type zinc-finger motif lies at 214–290 (CALCLEPIEQ…PATVNRCCSC (77 aa)).

It belongs to the SLX1 family. Forms a heterodimer with SLX4. A divalent metal cation is required as a cofactor.

It localises to the nucleus. In terms of biological role, catalytic subunit of the SLX1-SLX4 structure-specific endonuclease that resolves DNA secondary structures generated during DNA repair and recombination. Has endonuclease activity towards branched DNA substrates, introducing single-strand cuts in duplex DNA close to junctions with ss-DNA. The polypeptide is Structure-specific endonuclease subunit SLX1 (Scheffersomyces stipitis (strain ATCC 58785 / CBS 6054 / NBRC 10063 / NRRL Y-11545) (Yeast)).